A 199-amino-acid polypeptide reads, in one-letter code: Large ribosomal subunit protein uL13A (199 aa).

An N-acetylserine modification is found at Ser2. Lys177 participates in a covalent cross-link: Glycyl lysine isopeptide (Lys-Gly) (interchain with G-Cter in ubiquitin).

The protein belongs to the universal ribosomal protein uL13 family. In terms of assembly, component of the large ribosomal subunit (LSU). Mature yeast ribosomes consist of a small (40S) and a large (60S) subunit. The 40S small subunit contains 1 molecule of ribosomal RNA (18S rRNA) and 33 different proteins (encoded by 57 genes). The large 60S subunit contains 3 rRNA molecules (25S, 5.8S and 5S rRNA) and 46 different proteins (encoded by 81 genes). In terms of processing, N-terminally acetylated by acetyltransferase NatA.

It localises to the cytoplasm. Its function is as follows. Component of the ribosome, a large ribonucleoprotein complex responsible for the synthesis of proteins in the cell. The small ribosomal subunit (SSU) binds messenger RNAs (mRNAs) and translates the encoded message by selecting cognate aminoacyl-transfer RNA (tRNA) molecules. The large subunit (LSU) contains the ribosomal catalytic site termed the peptidyl transferase center (PTC), which catalyzes the formation of peptide bonds, thereby polymerizing the amino acids delivered by tRNAs into a polypeptide chain. The nascent polypeptides leave the ribosome through a tunnel in the LSU and interact with protein factors that function in enzymatic processing, targeting, and the membrane insertion of nascent chains at the exit of the ribosomal tunnel. The polypeptide is Large ribosomal subunit protein uL13A (Saccharomyces cerevisiae (strain ATCC 204508 / S288c) (Baker's yeast)).